The primary structure comprises 500 residues: Melanopsin (500 aa).

At 1 to 65 (MSHHSSWRGH…TVDVPDHAHY (65 aa)) the chain is on the extracellular side. A glycan (N-linked (GlcNAc...) asparagine) is linked at N18. A helical transmembrane segment spans residues 66 to 86 (IIGAVILIVGITGVIGNALVI). At 87–101 (YVFCRSRTLRTAGNM) the chain is on the cytoplasmic side. The helical transmembrane segment at 102-122 (FVVNLAVADFFMSLTQSPVFF) threads the bilayer. Residues 123–138 (AASLHRRWIFGERICE) are Extracellular-facing. C137 and C215 are oxidised to a cystine. The chain crosses the membrane as a helical span at residues 139-159 (LYAFCGALFGICSMMTLTAIA). Residues 160–182 (ADRCLAITQPLALVGNVSRRKAG) are Cytoplasmic-facing. The chain crosses the membrane as a helical span at residues 183–203 (AVLAVVWLYSLGWSLPPFFGW). The Extracellular segment spans residues 204–232 (SAYVPEGLQTSCSWDYMTFTPSVRAYTIL). The chain crosses the membrane as a helical span at residues 233 to 253 (LFIFVFFIPLGIIVSCYVGIF). Residues 254 to 286 (QAIRAMGKEIRELDCGETQKVYERMQNEWKMAK) lie on the Cytoplasmic side of the membrane. A helical membrane pass occupies residues 287 to 307 (IALLVILLFVISWSPYSVVAL). Residues 308–322 (TATAGYSHLLTPYMN) are Extracellular-facing. Residues 323–343 (SVPAVIAKASAIHNPIIYAIT) traverse the membrane as a helical segment. K330 carries the N6-(retinylidene)lysine modification. The Cytoplasmic portion of the chain corresponds to 344–500 (HPKYRAAIAR…DGKALLLGGN (157 aa)). Disordered regions lie at residues 406-428 (GKKRLSSASDSDSCWTESEADGS), 448-470 (VILSPGSSNSTASGQKSEKAHKV), and 481-500 (ETDSADESLSDGKALLLGGN). Composition is skewed to polar residues over residues 411–428 (SSASDSDSCWTESEADGS) and 448–462 (VILSPGSSNSTASGQ).

This sequence belongs to the G-protein coupled receptor 1 family. Opsin subfamily. As to expression, expressed in a subset of retinal horizontal cells as well as in retinal ganglion cells.

It localises to the cell membrane. Its function is as follows. Photoreceptor implicated in non-image-forming responses to light. The polypeptide is Melanopsin (opn4) (Rutilus rutilus (Roach)).